Here is a 627-residue protein sequence, read N- to C-terminus: Carnitine O-acetyltransferase (627 aa).

A propeptide spanning residues 1-30 (MDRKQKQAEKARPYGLLKPAALGKIPGRFQ) is cleaved from the precursor. Lys94 carries the post-translational modification N6-succinyllysine. An N6-acetyllysine; alternate modification is found at Lys262. N6-succinyllysine; alternate is present on Lys262. Lys269 is subject to N6-acetyllysine. His344 serves as the catalytic Proton acceptor. Residues Lys420 and 424–431 (KSEKISPD) contribute to the CoA site. Positions 453 and 455 each coordinate (R)-carnitine. Ser457 serves as a coordination point for CoA. Thr466 serves as a coordination point for (R)-carnitine. CoA is bound at residue Gln556. Residues 625–627 (SKL) carry the Microbody targeting signal motif.

This sequence belongs to the carnitine/choline acetyltransferase family. As to quaternary structure, monomer.

The protein localises to the endoplasmic reticulum. It localises to the peroxisome. Its subcellular location is the mitochondrion inner membrane. The catalysed reaction is (R)-carnitine + acetyl-CoA = O-acetyl-(R)-carnitine + CoA. It carries out the reaction propanoyl-CoA + (R)-carnitine = O-propanoyl-(R)-carnitine + CoA. It catalyses the reaction butanoyl-CoA + (R)-carnitine = O-butanoyl-(R)-carnitine + CoA. The enzyme catalyses hexanoyl-CoA + (R)-carnitine = O-hexanoyl-(R)-carnitine + CoA. The catalysed reaction is octanoyl-CoA + (R)-carnitine = O-octanoyl-(R)-carnitine + CoA. It carries out the reaction decanoyl-CoA + (R)-carnitine = O-decanoyl-(R)-carnitine + CoA. It catalyses the reaction 3-methylbutanoyl-CoA + (R)-carnitine = O-3-methylbutanoyl-(R)-carnitine + CoA. The enzyme catalyses 2-methylpropanoyl-CoA + (R)-carnitine = O-isobutanoyl-(R)-carnitine + CoA. The catalysed reaction is 2-methylbutanoyl-CoA + (R)-carnitine = O-2-methylbutanoyl-(R)-carnitine + CoA. It carries out the reaction acetoacetyl-CoA + (R)-carnitine = O-3-oxobutanoyl-(R)-carnitine + CoA. It catalyses the reaction 3-hydroxybutanoyl-CoA + (R)-carnitine = O-3-hydroxybutanoyl-(R)-carnitine + CoA. The enzyme catalyses 4,8-dimethylnonanoyl-CoA + (R)-carnitine = O-4,8-dimethylnonanoyl-(R)-carnitine + CoA. The catalysed reaction is 2,6-dimethylheptanoyl-CoA + (R)-carnitine = O-2,6-dimethylheptanoyl-(R)-carnitine + CoA. Functionally, catalyzes the reversible transfer of acyl groups from carnitine to coenzyme A (CoA) and regulates the acyl-CoA/CoA ratio. Also plays a crucial role in the transport of fatty acids for beta-oxidation. Responsible for the synthesis of short- and branched-chain acylcarnitines. Active towards some branched-chain amino acid oxidation pathway (BCAAO) intermediates. Trans-2-enoyl-CoAs and 2-methylacyl-CoAs are poor substrates. This is Carnitine O-acetyltransferase (CRAT) from Columba livia (Rock dove).